Here is a 571-residue protein sequence, read N- to C-terminus: Glycine--tRNA ligase (571 aa).

Substrate is bound by residues R99 and E165. Residues 197 to 199 (RNE), 207 to 212 (IRLREF), 324 to 325 (EC), and 443 to 446 (GIDR) each bind ATP. 212–216 (FTQAE) serves as a coordination point for substrate. Residue 439 to 443 (EPSFG) coordinates substrate.

It belongs to the class-II aminoacyl-tRNA synthetase family.

The protein resides in the cytoplasm. The catalysed reaction is tRNA(Gly) + glycine + ATP = glycyl-tRNA(Gly) + AMP + diphosphate. In terms of biological role, catalyzes the attachment of glycine to tRNA(Gly). This Pyrococcus abyssi (strain GE5 / Orsay) protein is Glycine--tRNA ligase.